Reading from the N-terminus, the 409-residue chain is Testis-expressed protein 13A (409 aa).

A required for repression of transcription region spans residues 92–408; the sequence is WLHGFAKLHK…CGKGIWLQKP (317 aa). Residues 347–374 form a disordered region; that stretch reads GGPHRIDHQEHPRDRRYSEPHQQRPPVY. Basic and acidic residues predominate over residues 348 to 368; the sequence is GPHRIDHQEHPRDRRYSEPHQ. Residues 376–400 form a RanBP2-type zinc finger; it reads RPGDWDCPWCNAVNFSRRDTCFDCG. Zn(2+) is bound by residues cysteine 382, cysteine 385, cysteine 396, and cysteine 399.

This sequence belongs to the TEX13 family. In terms of assembly, interacts with CNOT1; the interaction may inhibit CNOT1 binding to mRNA and subsequently CNOT1-mediated mRNA degradation. Testis specific.

Binds to ssRNA containing the consensus sequence 5'-AGGUAA-3'. Plays a role in transcriptional repression. Required for rapid sperm motility and timely degradation of mRNA via its interaction with CNOT1. This is Testis-expressed protein 13A from Homo sapiens (Human).